Reading from the N-terminus, the 93-residue chain is Beta-defensin 128 (93 aa).

The first 18 residues, 1 to 18, serve as a signal peptide directing secretion; the sequence is MKLFLVLIILLFEVLTDG. Cystine bridges form between Cys24/Cys52, Cys32/Cys46, and Cys36/Cys53.

It belongs to the beta-defensin family.

It localises to the secreted. Has antibacterial activity. The protein is Beta-defensin 128 (DEFB128) of Macaca fascicularis (Crab-eating macaque).